Here is a 379-residue protein sequence, read N- to C-terminus: S-adenosylmethionine synthase (379 aa).

Residue His15 coordinates ATP. Mg(2+) is bound at residue Asp17. K(+) is bound at residue Glu43. The L-methionine site is built by Glu56 and Gln99. Positions Gln99 to Arg109 are flexible loop. ATP-binding positions include Asp164–Lys166, Arg230–Phe231, Asp239, Arg245–Lys246, Ala262, and Lys266. Asp239 contacts L-methionine. Lys270 lines the L-methionine pocket.

It belongs to the AdoMet synthase family. As to quaternary structure, homotetramer; dimer of dimers. Mg(2+) is required as a cofactor. K(+) serves as cofactor.

The protein localises to the cytoplasm. The catalysed reaction is L-methionine + ATP + H2O = S-adenosyl-L-methionine + phosphate + diphosphate. It functions in the pathway amino-acid biosynthesis; S-adenosyl-L-methionine biosynthesis; S-adenosyl-L-methionine from L-methionine: step 1/1. Catalyzes the formation of S-adenosylmethionine (AdoMet) from methionine and ATP. The overall synthetic reaction is composed of two sequential steps, AdoMet formation and the subsequent tripolyphosphate hydrolysis which occurs prior to release of AdoMet from the enzyme. This Buchnera aphidicola subsp. Schizaphis graminum (strain Sg) protein is S-adenosylmethionine synthase.